Reading from the N-terminus, the 402-residue chain is Arginine biosynthesis bifunctional protein ArgJ (402 aa).

Thr-149, Lys-175, Thr-186, Glu-266, Asn-397, and Thr-402 together coordinate substrate. The active-site Nucleophile is the Thr-186.

It belongs to the ArgJ family. As to quaternary structure, heterotetramer of two alpha and two beta chains.

The protein resides in the cytoplasm. It carries out the reaction N(2)-acetyl-L-ornithine + L-glutamate = N-acetyl-L-glutamate + L-ornithine. It catalyses the reaction L-glutamate + acetyl-CoA = N-acetyl-L-glutamate + CoA + H(+). Its pathway is amino-acid biosynthesis; L-arginine biosynthesis; L-ornithine and N-acetyl-L-glutamate from L-glutamate and N(2)-acetyl-L-ornithine (cyclic): step 1/1. The protein operates within amino-acid biosynthesis; L-arginine biosynthesis; N(2)-acetyl-L-ornithine from L-glutamate: step 1/4. Functionally, catalyzes two activities which are involved in the cyclic version of arginine biosynthesis: the synthesis of N-acetylglutamate from glutamate and acetyl-CoA as the acetyl donor, and of ornithine by transacetylation between N(2)-acetylornithine and glutamate. The sequence is that of Arginine biosynthesis bifunctional protein ArgJ from Prochlorococcus marinus subsp. pastoris (strain CCMP1986 / NIES-2087 / MED4).